The chain runs to 143 residues: Transcriptional regulator MraZ (143 aa).

2 SpoVT-AbrB domains span residues 5-47 (EYRH…TQEE) and 76-119 (ATEC…SEDR).

This sequence belongs to the MraZ family. As to quaternary structure, forms oligomers.

The protein resides in the cytoplasm. It is found in the nucleoid. This Ligilactobacillus salivarius (strain UCC118) (Lactobacillus salivarius) protein is Transcriptional regulator MraZ.